The following is a 101-amino-acid chain: MMTEHVLILSAYLFSIGIYGLITSRNMVRALMCLELILNAVNLNLVTFSDLFDSRQLKGDIFSIFVIAIAAAEAAIGPAIVSSIYRNRKSTRINQSNLLNK.

Helical transmembrane passes span 2–22, 32–52, and 61–81; these read MTEH…YGLI, MCLE…SDLF, and IFSI…PAIV.

The protein belongs to the complex I subunit 4L family. In terms of assembly, NDH is composed of at least 16 different subunits, 5 of which are encoded in the nucleus.

It localises to the plastid. Its subcellular location is the chloroplast thylakoid membrane. It carries out the reaction a plastoquinone + NADH + (n+1) H(+)(in) = a plastoquinol + NAD(+) + n H(+)(out). It catalyses the reaction a plastoquinone + NADPH + (n+1) H(+)(in) = a plastoquinol + NADP(+) + n H(+)(out). Its function is as follows. NDH shuttles electrons from NAD(P)H:plastoquinone, via FMN and iron-sulfur (Fe-S) centers, to quinones in the photosynthetic chain and possibly in a chloroplast respiratory chain. The immediate electron acceptor for the enzyme in this species is believed to be plastoquinone. Couples the redox reaction to proton translocation, and thus conserves the redox energy in a proton gradient. This is NAD(P)H-quinone oxidoreductase subunit 4L, chloroplastic from Liriodendron tulipifera (Tuliptree).